The chain runs to 621 residues: 1-deoxy-D-xylulose-5-phosphate synthase (621 aa).

Thiamine diphosphate contacts are provided by residues His80 and 121-123 (GHS). A Mg(2+)-binding site is contributed by Asp152. Residues 153–154 (GA), Asn181, Tyr288, and Glu370 contribute to the thiamine diphosphate site. Asn181 lines the Mg(2+) pocket.

Belongs to the transketolase family. DXPS subfamily. Homodimer. Mg(2+) is required as a cofactor. Thiamine diphosphate serves as cofactor.

It carries out the reaction D-glyceraldehyde 3-phosphate + pyruvate + H(+) = 1-deoxy-D-xylulose 5-phosphate + CO2. It participates in metabolic intermediate biosynthesis; 1-deoxy-D-xylulose 5-phosphate biosynthesis; 1-deoxy-D-xylulose 5-phosphate from D-glyceraldehyde 3-phosphate and pyruvate: step 1/1. Functionally, catalyzes the acyloin condensation reaction between C atoms 2 and 3 of pyruvate and glyceraldehyde 3-phosphate to yield 1-deoxy-D-xylulose-5-phosphate (DXP). This is 1-deoxy-D-xylulose-5-phosphate synthase from Vibrio parahaemolyticus serotype O3:K6 (strain RIMD 2210633).